A 264-amino-acid chain; its full sequence is UPF0162 protein PM0557 (264 aa).

The protein belongs to the UPF0162 family.

The chain is UPF0162 protein PM0557 from Pasteurella multocida (strain Pm70).